Consider the following 487-residue polypeptide: N-succinylglutamate 5-semialdehyde dehydrogenase (487 aa).

Glycine 221–glycine 226 contributes to the NAD(+) binding site. Catalysis depends on residues glutamate 244 and cysteine 278.

This sequence belongs to the aldehyde dehydrogenase family. AstD subfamily.

The enzyme catalyses N-succinyl-L-glutamate 5-semialdehyde + NAD(+) + H2O = N-succinyl-L-glutamate + NADH + 2 H(+). It participates in amino-acid degradation; L-arginine degradation via AST pathway; L-glutamate and succinate from L-arginine: step 4/5. Catalyzes the NAD-dependent reduction of succinylglutamate semialdehyde into succinylglutamate. The polypeptide is N-succinylglutamate 5-semialdehyde dehydrogenase (Paraburkholderia xenovorans (strain LB400)).